We begin with the raw amino-acid sequence, 411 residues long: 6-hydroxytryprostatin B O-methyltransferase (411 aa).

Position 270 (Asp-270) interacts with S-adenosyl-L-methionine. Residue His-313 is the Proton acceptor of the active site.

This sequence belongs to the class I-like SAM-binding methyltransferase superfamily. Cation-independent O-methyltransferase family. Homodimer.

The enzyme catalyses 6-hydroxytryprostatin B + S-adenosyl-L-methionine = tryprostatin A + S-adenosyl-L-homocysteine + H(+). Its pathway is alkaloid biosynthesis. Functionally, 6-hydroxytryprostatin B O-methyltransferase; part of the gene cluster that mediates the biosynthesis of fumitremorgins, indole alkaloids that carry not only intriguing chemical structures, but also interesting biological and pharmacological activities. The biosynthesis of fumitremorgin-type alkaloids begins by condensation of the two amino acids L-tryptophan and L-proline to brevianamide F, catalyzed by the non-ribosomal peptide synthetase ftmPS/ftmA. Brevianamide F is then prenylated by the prenyltransferase ftmPT1/ftmB in the presence of dimethylallyl diphosphate, resulting in the formation of tryprostatin B. The three cytochrome P450 monooxygenases, ftmP450-1/ftmC, ftmP450-2/ftmE and ftmP450-3/FtmG, are responsible for the conversion of tryprostatin B to 6-hydroxytryprostatin B, tryprostatin A to fumitremorgin C and fumitremorgin C to 12,13-dihydroxyfumitremorgin C, respectively. The putative methyltransferase ftmMT/ftmD is expected for the conversion of 6-hydroxytryprostatin B to tryprostatin A. FtmPT2/FtmH catalyzes the prenylation of 12,13-dihydroxyfumitre-morgin C in the presence of dimethylallyl diphosphate, resulting in the formation of fumitremorgin B. Fumitremorgin B is further converted to verruculogen by ftmOx1/ftmF via the insertion of an endoperoxide bond between the two prenyl moieties. Finally, verruculogen is further converted to fumitremorgin A by the verruculogen prenyltransferase ftmPT3. This Neosartorya fischeri (strain ATCC 1020 / DSM 3700 / CBS 544.65 / FGSC A1164 / JCM 1740 / NRRL 181 / WB 181) (Aspergillus fischerianus) protein is 6-hydroxytryprostatin B O-methyltransferase.